The following is a 1905-amino-acid chain: MRRQWGALLLGALLCAHGLASSPECACGRSHFTCAVSALGECTCIPAQWQCDGDNDCGDHSDEDGCILPTCSPLDFHCDNGKCIRRSWVCDGDNDCEDDSDEQDCPPRECEEDEFPCQNGYCIRSLWHCDGDNDCGDNSDEQCDMRKCSDKEFRCSDGSCIAEHWYCDGDTDCKDGSDEENCPSAVPAPPCNLEEFQCAYGRCILDIYHCDGDDDCGDWSDESDCSSHQPCRSGEFMCDSGLCINAGWRCDGDADCDDQSDERNCTTSMCTAEQFRCHSGRCVRLSWRCDGEDDCADNSDEENCENTGSPQCALDQFLCWNGRCIGQRKLCNGVNDCGDNSDESPQQNCRPRTGEENCNVNNGGCAQKCQMVRGAVQCTCHTGYRLTEDGHTCQDVNECAEEGYCSQGCTNSEGAFQCWCETGYELRPDRRSCKALGPEPVLLFANRIDIRQVLPHRSEYTLLLNNLENAIALDFHHRRELVFWSDVTLDRILRANLNGSNVEEVVSTGLESPGGLAVDWVHDKLYWTDSGTSRIEVANLDGAHRKVLLWQNLEKPRAIALHPMEGTIYWTDWGNTPRIEASSMDGSGRRIIADTHLFWPNGLTIDYAGRRMYWVDAKHHVIERANLDGSHRKAVISQGLPHPFAITVFEDSLYWTDWHTKSINSANKFTGKNQEIIRNKLHFPMDIHTLHPQRQPAGKNRCGDNNGGCTHLCLPSGQNYTCACPTGFRKISSHACAQSLDKFLLFARRMDIRRISFDTEDLSDDVIPLADVRSAVALDWDSRDDHVYWTDVSTDTISRAKWDGTGQEVVVDTSLESPAGLAIDWVTNKLYWTDAGTDRIEVANTDGSMRTVLIWENLDRPRDIVVEPMGGYMYWTDWGASPKIERAGMDASGRQVIISSNLTWPNGLAIDYGSQRLYWADAGMKTIEFAGLDGSKRKVLIGSQLPHPFGLTLYGERIYWTDWQTKSIQSADRLTGLDRETLQENLENLMDIHVFHRRRPPVSTPCAMENGGCSHLCLRSPNPSGFSCTCPTGINLLSDGKTCSPGMNSFLIFARRIDIRMVSLDIPYFADVVVPINITMKNTIAIGVDPQEGKVYWSDSTLHRISRANLDGSQHEDIITTGLQTTDGLAVDAIGRKVYWTDTGTNRIEVGNLDGSMRKVLVWQNLDSPRAIVLYHEMGFMYWTDWGENAKLERSGMDGSDRAVLINNNLGWPNGLTVDKASSQLLWADAHTERIEAADLNGANRHTLVSPVQHPYGLTLLDSYIYWTDWQTRSIHRADKGTGSNVILVRSNLPGLMDMQAVDRAQPLGFNKCGSRNGGCSHLCLPRPSGFSCACPTGIQLKGDGKTCDPSPETYLLFSSRGSIRRISLDTSDHTDVHVPVPELNNVISLDYDSVDGKVYYTDVFLDVIRRADLNGSNMETVIGRGLKTTDGLAVDWVARNLYWTDTGRNTIEASRLDGSCRKVLINNSLDEPRAIAVFPRKGYLFWTDWGHIAKIERANLDGSERKVLINTDLGWPNGLTLDYDTRRIYWVDAHLDRIESADLNGKLRQVLVSHVSHPFALTQQDRWIYWTDWQTKSIQRVDKYSGRNKETVLANVEGLMDIIVVSPQRQTGTNACGVNNGGCTHLCFARASDFVCACPDEPDSRPCSLVPGLVPPAPRATGMSEKSPVLPNTPPTTLYSSTTRTRTSLEEVEGRCSERDARLGLCARSNDAVPAAPGEGLHISYAIGGLLSILLILVVIAALMLYRHKKSKFTDPGMGNLTYSNPSYRTSTQEVKIEAIPKPAMYNQLCYKKEGGPDHNYTKEKIKIVEGICLLSGDDAEWDDLKQLRSSRGGLLRDHVCMKTDTVSIQASSGSLDDTETEQLLQEEQSECSSVHTAATPERRGSLPDTGWKHERKLSSESQV.

An N-terminal signal peptide occupies residues 1–20 (MRRQWGALLLGALLCAHGLA). The Extracellular segment spans residues 21–1725 (SSPECACGRS…AAPGEGLHIS (1705 aa)). LDL-receptor class A domains lie at 26-67 (ACGR…DGCI), 70-106 (TCSPLDFHCDNGKCIRRSWVCDGDNDCEDDSDEQDCP), 109-144 (ECEEDEFPCQNGYCIRSLWHCDGDNDCGDNSDEQCD), 147-183 (KCSDKEFRCSDGSCIAEHWYCDGDTDCKDGSDEENCP), 190-226 (PCNLEEFQCAYGRCILDIYHCDGDDDCGDWSDESDCS), 230-266 (PCRSGEFMCDSGLCINAGWRCDGDADCDDQSDERNCT), 269-305 (MCTAEQFRCHSGRCVRLSWRCDGEDDCADNSDEENCE), and 311-350 (QCALDQFLCWNGRCIGQRKLCNGVNDCGDNSDESPQQNCR). Cystine bridges form between Cys27-Cys44, Cys34-Cys57, Cys51-Cys66, Cys71-Cys83, Cys78-Cys96, Cys90-Cys105, Cys110-Cys122, Cys117-Cys135, Cys129-Cys143, Cys148-Cys160, Cys155-Cys173, Cys167-Cys182, Cys191-Cys203, Cys198-Cys216, Cys210-Cys225, Cys231-Cys243, Cys238-Cys256, Cys250-Cys265, Cys270-Cys282, Cys277-Cys295, Cys289-Cys304, Cys312-Cys324, Cys319-Cys337, Cys331-Cys349, Cys358-Cys369, Cys365-Cys378, Cys380-Cys393, Cys399-Cys409, Cys405-Cys418, and Cys420-Cys433. Asn264 carries an N-linked (GlcNAc...) asparagine glycan. The EGF-like 1; calcium-binding domain occupies 354–394 (GEENCNVNNGGCAQKCQMVRGAVQCTCHTGYRLTEDGHTCQ). The EGF-like 2; calcium-binding domain occupies 395-434 (DVNECAEEGYCSQGCTNSEGAFQCWCETGYELRPDRRSCK). LDL-receptor class B repeat units follow at residues 480-522 (ELVF…DWVH), 523-565 (DKLY…HPME), 566-609 (GTIY…DYAG), 610-652 (RRMY…FEDS), and 653-693 (LYWT…LHPQ). N-linked (GlcNAc...) asparagine glycosylation is present at Asn498. Positions 698 to 737 (GKNRCGDNNGGCTHLCLPSGQNYTCACPTGFRKISSHACA) constitute an EGF-like 3 domain. 3 cysteine pairs are disulfide-bonded: Cys702–Cys713, Cys709–Cys722, and Cys724–Cys736. A glycan (N-linked (GlcNAc...) asparagine) is linked at Asn719. LDL-receptor class B repeat units lie at residues 785-827 (DHVY…DWVT), 828-870 (NKLY…EPMG), 871-914 (GYMY…DYGS), 915-956 (QRLY…LYGE), and 957-998 (RIYW…FHRR). N-linked (GlcNAc...) asparagine glycosylation occurs at Asn901. A glycan (N-linked (GlcNAc...) asparagine) is linked at Asn1077. 10 LDL-receptor class B repeats span residues 1093-1135 (GKVY…DAIG), 1136-1178 (RKVY…YHEM), 1179-1222 (GFMY…DKAS), 1223-1263 (SQLL…LLDS), 1264-1306 (YIYW…DRAQ), 1397-1439 (GKVY…DWVA), 1440-1482 (RNLY…FPRK), 1483-1526 (GYLF…DYDT), 1527-1568 (RRIY…QDRW), and 1569-1610 (IYWT…SPQR). Residues Asn1415 and Asn1467 are each glycosylated (N-linked (GlcNAc...) asparagine). Residues 1659 to 1686 (PRATGMSEKSPVLPNTPPTTLYSSTTRT) form a disordered region. Over residues 1676 to 1686 (PTTLYSSTTRT) the composition is skewed to low complexity. Residues 1726–1746 (YAIGGLLSILLILVVIAALML) traverse the membrane as a helical segment. Residues 1747–1905 (YRHKKSKFTD…ERKLSSESQV (159 aa)) are Cytoplasmic-facing. The Endocytosis signal signature appears at 1766–1769 (NPSY). The interval 1852-1905 (ASSGSLDDTETEQLLQEEQSECSSVHTAATPERRGSLPDTGWKHERKLSSESQV) is disordered. The segment covering 1882–1905 (PERRGSLPDTGWKHERKLSSESQV) has biased composition (basic and acidic residues).

It belongs to the LDLR family. In terms of assembly, homooligomer. Interacts with MUSK; the heterodimer forms an AGRIN receptor complex that binds AGRIN resulting in activation of MUSK. Interacts (via the extracellular domain) with SOST; the interaction facilitates the inhibition of Wnt signaling. Interacts with MESD; the interaction promotes glycosylation of LRP4 and its cell-surface expression. As to expression, expressed in bone; present in osteoblasts and osteocytes. No expression is observed in osteoclast. Expressed in several regions of the brain.

It localises to the cell membrane. In terms of biological role, mediates SOST-dependent inhibition of bone formation. Functions as a specific facilitator of SOST-mediated inhibition of Wnt signaling. Plays a key role in the formation and the maintenance of the neuromuscular junction (NMJ), the synapse between motor neuron and skeletal muscle. Directly binds AGRIN and recruits it to the MUSK signaling complex. Mediates the AGRIN-induced phosphorylation of MUSK, the kinase of the complex. The activation of MUSK in myotubes induces the formation of NMJ by regulating different processes including the transcription of specific genes and the clustering of AChR in the postsynaptic membrane. Alternatively, may be involved in the negative regulation of the canonical Wnt signaling pathway, being able to antagonize the LRP6-mediated activation of this pathway. More generally, has been proposed to function as a cell surface endocytic receptor binding and internalizing extracellular ligands for degradation by lysosomes. May play an essential role in the process of digit differentiation. In Homo sapiens (Human), this protein is Low-density lipoprotein receptor-related protein 4 (LRP4).